The primary structure comprises 51 residues: MARYRCCRSKSRSRCRRRRRRCRRRRRRCCRRRRRRCCRRRRSYTIRCKKY.

2 disulfides stabilise this stretch: Cys7-Cys15 and Cys38-Cys48.

Belongs to the protamine P1 family. In terms of assembly, cross-linked by interchain disulfide bonds around the DNA-helix. In terms of processing, phosphorylated by SRPK1. As to expression, testis.

Its subcellular location is the nucleus. The protein resides in the chromosome. Protamines substitute for histones in the chromatin of sperm during the haploid phase of spermatogenesis. They compact sperm DNA into a highly condensed, stable and inactive complex. This Mus musculus (Mouse) protein is Sperm protamine P1 (Prm1).